The chain runs to 24 residues: SM-11044-binding protein (24 aa).

In terms of biological role, may mediate relaxation of depolarized colon tonus. It binds iodocyanopindolol and SM-11044. The polypeptide is SM-11044-binding protein (Rattus norvegicus (Rat)).